The primary structure comprises 410 residues: Magnesium transporter NIPA3 (410 aa).

Residues 1–67 (MGAQVRLPPG…ISANVENKYS (67 aa)) lie on the Extracellular side of the membrane. N-linked (GlcNAc...) asparagine glycosylation is found at Asn-25, Asn-35, Asn-50, and Asn-55. The chain crosses the membrane as a helical span at residues 68-88 (LYVGLVLAVSSSIFIGSSFIL). Topologically, residues 89 to 114 (KKKGLLQLASKGFTRAGQGGHSYLKE) are cytoplasmic. A helical membrane pass occupies residues 115-135 (WLWWVGLLSMGAGEAANFAAY). Ala-136 is a topological domain (extracellular). Residues 137 to 157 (FAPATLVTPLGALSVLISAIL) traverse the membrane as a helical segment. Residues 158–165 (SSYFLNEH) lie on the Cytoplasmic side of the membrane. Residues 166–186 (LNIHGKIGCILSILGSTVMVI) form a helical membrane-spanning segment. The Extracellular segment spans residues 187–207 (HAPQEEEVTSLHEMEMKLRDP). Residues 208–228 (GFISFAVIITVISLVLILIVA) traverse the membrane as a helical segment. Topologically, residues 229–233 (PKKGQ) are cytoplasmic. Residues 234–254 (TNILVYISICSLIGAFSVSSV) traverse the membrane as a helical segment. The Extracellular segment spans residues 255–273 (KGLGIAIKELIEWKPVYKH). A helical membrane pass occupies residues 274–294 (PLVFVLLAVLVLSVTTQINYL). Residues 295–305 (NKALDTFNTSL) are Cytoplasmic-facing. A helical membrane pass occupies residues 306–326 (VTPIYYVFFTSMVVTCSAILF). Residues 327–336 (QEWYGMTAGD) are Extracellular-facing. A helical transmembrane segment spans residues 337-357 (IIGTLSGFFTIIIGIFLLHAF). Topologically, residues 358–410 (KNTDITWSELTSTAKKEAVSLNVNENNYVLLENLECSAPGYNDDVTLFSRTDD) are cytoplasmic.

The protein belongs to the NIPA family. Expressed in the pancreatic islets.

It localises to the golgi apparatus membrane. It catalyses the reaction Mg(2+)(in) = Mg(2+)(out). In terms of biological role, acts as a Mg(2+) transporter. Can also transport other divalent cations such as Fe(2+), Sr(2+), Ba(2+), Mn(2+), Cu(2+) and Co(2+) but to a much less extent than Mg(2+). The polypeptide is Magnesium transporter NIPA3 (NIPAL1) (Homo sapiens (Human)).